The primary structure comprises 489 residues: Long chain base biosynthesis protein 2a (489 aa).

Residues 2 to 22 (ITIPYLTAVSTYFSYGLLFAF) form a helical membrane-spanning segment. Lys-311 is modified (N6-(pyridoxal phosphate)lysine).

It belongs to the class-II pyridoxal-phosphate-dependent aminotransferase family. As to quaternary structure, heterodimer with LCB1. Component of the serine palmitoyltransferase (SPT) complex, composed of LCB1 and LCB2 (LCB2a or LCB2b). Pyridoxal 5'-phosphate serves as cofactor. Ubiquitous. Detected in leaves, roots, stems, flowers and at a lower level in mature seeds.

The protein resides in the endoplasmic reticulum membrane. The catalysed reaction is L-serine + hexadecanoyl-CoA + H(+) = 3-oxosphinganine + CO2 + CoA. Its pathway is lipid metabolism; sphingolipid metabolism. Serine palmitoyltransferase (SPT). The heterodimer formed with LCB1 constitutes the catalytic core. Involved in the regulation of the programmed cell death (PCD) signaling pathway. Plays an important role during male gametogenesis and embryogenesis. This chain is Long chain base biosynthesis protein 2a (LCB2a), found in Arabidopsis thaliana (Mouse-ear cress).